The primary structure comprises 277 residues: Thiazole synthase (277 aa).

Lysine 116 serves as the catalytic Schiff-base intermediate with DXP. 1-deoxy-D-xylulose 5-phosphate is bound by residues glycine 177, 203–204 (AG), and 225–226 (NT).

This sequence belongs to the ThiG family. As to quaternary structure, homotetramer. Forms heterodimers with either ThiH or ThiS.

It is found in the cytoplasm. It catalyses the reaction [ThiS sulfur-carrier protein]-C-terminal-Gly-aminoethanethioate + 2-iminoacetate + 1-deoxy-D-xylulose 5-phosphate = [ThiS sulfur-carrier protein]-C-terminal Gly-Gly + 2-[(2R,5Z)-2-carboxy-4-methylthiazol-5(2H)-ylidene]ethyl phosphate + 2 H2O + H(+). It functions in the pathway cofactor biosynthesis; thiamine diphosphate biosynthesis. Functionally, catalyzes the rearrangement of 1-deoxy-D-xylulose 5-phosphate (DXP) to produce the thiazole phosphate moiety of thiamine. Sulfur is provided by the thiocarboxylate moiety of the carrier protein ThiS. In vitro, sulfur can be provided by H(2)S. The chain is Thiazole synthase from Thermosynechococcus vestitus (strain NIES-2133 / IAM M-273 / BP-1).